A 294-amino-acid polypeptide reads, in one-letter code: 4-diphosphocytidyl-2-C-methyl-D-erythritol kinase (294 aa).

Residue Lys23 is part of the active site. 106 to 116 (PMGGGLGGGSS) lines the ATP pocket. Asp148 is a catalytic residue.

The protein belongs to the GHMP kinase family. IspE subfamily.

The enzyme catalyses 4-CDP-2-C-methyl-D-erythritol + ATP = 4-CDP-2-C-methyl-D-erythritol 2-phosphate + ADP + H(+). It functions in the pathway isoprenoid biosynthesis; isopentenyl diphosphate biosynthesis via DXP pathway; isopentenyl diphosphate from 1-deoxy-D-xylulose 5-phosphate: step 3/6. In terms of biological role, catalyzes the phosphorylation of the position 2 hydroxy group of 4-diphosphocytidyl-2C-methyl-D-erythritol. This chain is 4-diphosphocytidyl-2-C-methyl-D-erythritol kinase, found in Nitrosospira multiformis (strain ATCC 25196 / NCIMB 11849 / C 71).